The following is a 448-amino-acid chain: Trigger factor (448 aa).

The region spanning 167 to 253 is the PPIase FKBP-type domain; the sequence is GSIVRVDFVE…IKDIKKRDIP (87 aa).

This sequence belongs to the FKBP-type PPIase family. Tig subfamily.

The protein resides in the cytoplasm. It carries out the reaction [protein]-peptidylproline (omega=180) = [protein]-peptidylproline (omega=0). Functionally, involved in protein export. Acts as a chaperone by maintaining the newly synthesized protein in an open conformation. Functions as a peptidyl-prolyl cis-trans isomerase. This Borrelia hermsii (strain HS1 / DAH) protein is Trigger factor.